The primary structure comprises 525 residues: Probable histidine ammonia-lyase (525 aa).

The 5-imidazolinone (Ala-Gly) cross-link spans 145–147 (ASG). Residue Ser-146 is modified to 2,3-didehydroalanine (Ser).

Belongs to the PAL/histidase family. Contains an active site 4-methylidene-imidazol-5-one (MIO), which is formed autocatalytically by cyclization and dehydration of residues Ala-Ser-Gly.

The protein localises to the cytoplasm. It carries out the reaction L-histidine = trans-urocanate + NH4(+). Its pathway is amino-acid degradation; L-histidine degradation into L-glutamate; N-formimidoyl-L-glutamate from L-histidine: step 1/3. The polypeptide is Probable histidine ammonia-lyase (Halobacterium salinarum (strain ATCC 29341 / DSM 671 / R1)).